Reading from the N-terminus, the 985-residue chain is P3N-PIPO polyprotein (985 aa).

Residues 144–287 enclose the Peptidase S30 domain; that stretch reads TFRDGHMNKF…MATVTHMEQY (144 aa). Catalysis depends on for P1 proteinase activity residues histidine 195, aspartate 204, and serine 238. An Involved in interaction with stylet and aphid transmission motif is present at residues 337-340; the sequence is KLTC. The Involved in virions binding and aphid transmission signature appears at 595–597; it reads PTK. Residues 621-743 form the Peptidase C6 domain; it reads LYIALDGYCY…ESEIKHYRVG (123 aa). Active-site for helper component proteinase activity residues include cysteine 629 and histidine 702.

Belongs to the potyviridae P3N-PIPO polyprotein family. As to quaternary structure, interacts (via PIPO domain) with host PCaP1 protein; this interaction may help to anchor the movement complex to the plasma membrane from which the complex could move to the plasmodesmata. Post-translationally, potyviral RNA is expressed as two polyproteins which undergo post-translational proteolytic processing. Genome polyprotein is processed by NIa-pro, P1 and HC-pro proteinases resulting in the production of at least ten individual proteins. P3N-PIPO is cleaved by P1 and HC-pro proteinases resulting in the production of three individual proteins. The P1 proteinase and the HC-pro cleave only their respective C-termini autocatalytically.

Its subcellular location is the host cell junction. The protein localises to the host plasmodesma. It catalyses the reaction Hydrolyzes a Gly-|-Gly bond at its own C-terminus, commonly in the sequence -Tyr-Xaa-Val-Gly-|-Gly, in the processing of the potyviral polyprotein.. Its function is as follows. Required for aphid transmission and also has proteolytic activity. Only cleaves a Gly-Gly dipeptide at its own C-terminus. Interacts with virions and aphid stylets. Acts as a suppressor of RNA-mediated gene silencing, also known as post-transcriptional gene silencing (PTGS), a mechanism of plant viral defense that limits the accumulation of viral RNAs. May have RNA-binding activity. In terms of biological role, allows efficient cell to cell propagation, by bypassing the host cell wall barrier. Transports viral genome to neighboring plant cells directly through plasmosdesmata, without any budding. In Pepper mottle virus (isolate California) (PeMV), this protein is P3N-PIPO polyprotein.